The primary structure comprises 265 residues: Deoxycytidine kinase 1 (265 aa).

30–38 (GNIAAGKST) contacts ATP. 3 residues coordinate substrate: Glu-55, Tyr-88, and Gln-99. Glu-129 functions as the Proton acceptor in the catalytic mechanism. Arg-130 and Asp-135 together coordinate substrate. 190–194 (RVYTR) lines the ATP pocket. Glu-199 is a binding site for substrate. 242-244 (EDF) contacts ATP.

The protein belongs to the DCK/DGK family. As to quaternary structure, homodimer.

It localises to the nucleus. It catalyses the reaction 2'-deoxycytidine + a ribonucleoside 5'-triphosphate = dCMP + a ribonucleoside 5'-diphosphate + H(+). It carries out the reaction 2'-deoxyguanosine + ATP = dGMP + ADP + H(+). The enzyme catalyses 2'-deoxyadenosine + ATP = dAMP + ADP + H(+). Phosphorylates the deoxyribonucleosides deoxyadenosine, deoxycytidine and deoxyguanosine with highest activity against deoxycytidine followed by deadenosine and deoxyguanosine. Shows only very minor activity against deoxyuridine and deoxythymidine. This Xenopus laevis (African clawed frog) protein is Deoxycytidine kinase 1.